A 358-amino-acid polypeptide reads, in one-letter code: Alanine racemase (358 aa).

Residue Lys-34 is the Proton acceptor; specific for D-alanine of the active site. Lys-34 carries the N6-(pyridoxal phosphate)lysine modification. Arg-130 contacts substrate. The active-site Proton acceptor; specific for L-alanine is the Tyr-254. Met-302 serves as a coordination point for substrate.

This sequence belongs to the alanine racemase family. Requires pyridoxal 5'-phosphate as cofactor.

The enzyme catalyses L-alanine = D-alanine. It participates in amino-acid biosynthesis; D-alanine biosynthesis; D-alanine from L-alanine: step 1/1. Catalyzes the interconversion of L-alanine and D-alanine. May also act on other amino acids. This chain is Alanine racemase (alr), found in Actinobacillus succinogenes (strain ATCC 55618 / DSM 22257 / CCUG 43843 / 130Z).